The following is a 188-amino-acid chain: ATP synthase subunit b (188 aa).

Residues 30–50 (IVWSLIPFLIILIVFWKLVLP) traverse the membrane as a helical segment.

The protein belongs to the ATPase B chain family. F-type ATPases have 2 components, F(1) - the catalytic core - and F(0) - the membrane proton channel. F(1) has five subunits: alpha(3), beta(3), gamma(1), delta(1), epsilon(1). F(0) has three main subunits: a(1), b(2) and c(10-14). The alpha and beta chains form an alternating ring which encloses part of the gamma chain. F(1) is attached to F(0) by a central stalk formed by the gamma and epsilon chains, while a peripheral stalk is formed by the delta and b chains.

The protein resides in the cell membrane. Its function is as follows. F(1)F(0) ATP synthase produces ATP from ADP in the presence of a proton or sodium gradient. F-type ATPases consist of two structural domains, F(1) containing the extramembraneous catalytic core and F(0) containing the membrane proton channel, linked together by a central stalk and a peripheral stalk. During catalysis, ATP synthesis in the catalytic domain of F(1) is coupled via a rotary mechanism of the central stalk subunits to proton translocation. In terms of biological role, component of the F(0) channel, it forms part of the peripheral stalk, linking F(1) to F(0). This is ATP synthase subunit b from Corynebacterium glutamicum (strain R).